A 336-amino-acid chain; its full sequence is MKKEHVLHCQFSAWYPFFRGVTIKSVILPLPQNVKDYLLDDGTLVVSGRDDPPTHSQPDSDDEAEEIQWSDDENTATLTAPEFPEFATKVQEAINSLGGSVFPKLNWSAPRDAYWIAMNSSLKCKTLSDIFLLFKSSDFITRDFTQPFIHCTDDSPDPCIEYELVLRKWCELIPGAEFRCFVKENKLIGISQRDYTQYYDHISKQKEEIRRCIQDFFKKHIQYKFLDEDFVFDIYRDSRGKVWLIDFNPFGEVTDSLLFTWEELISENNLNGDFSEVDAQEQDSPAFRCTNSEVTVQPSPYLSYRLPKDFVDLSTGEDAHKLIDFLKLKRNQQEDD.

Ser-60 carries the phosphoserine modification. Lys-104, Trp-107, Ala-109, Arg-111, Arg-167, Lys-168, Trp-169, Cys-170, Glu-177, Arg-179, Arg-193, Asp-233, Asp-246, and Asn-248 together coordinate ATP. The Mg(2+) site is built by Asp-246 and Asn-248.

Belongs to the CDC123 family. In terms of assembly, interacts with the eIF2 complex gamma subunit EIF2S3 (via C-terminus); the interaction is direct. Interacts with the eIF2 complex alpha subunit EIF2S1. Interacts with the eIF2 complex beta subunit EIF2S2. As to expression, widely expressed. Expressed in spleen, thymus, prostate, testis, ovary, small intestine, colon and leukocytes with the highest expression in testis.

The protein resides in the cytoplasm. ATP-dependent protein-folding chaperone for the eIF2 complex. Binds to the gamma subunit of the eIF2 complex which allows the subunit to assemble with the alpha and beta subunits. In Homo sapiens (Human), this protein is Translation initiation factor eIF2 assembly protein (CDC123).